The following is a 330-amino-acid chain: Protein TIFY 11f (330 aa).

Positions 61-97 (EAAAAAQLKIMYGGRMLVFDDFFPAGGAVVELVRAAA) constitute a Tify 1 domain. Positions 124 to 142 (PVVRKVSLQRFVEKRRRMR) match the Jas motif. The Nuclear localization signal motif lies at 126 to 133 (VRKVSLQR). The region spanning 228–264 (EAAAAAQLKIMYGGRMLVFDDFFPAGGAVVELVRAAA) is the Tify 2 domain. Residues 267–330 (GRDDDGARAR…SGRTDDAAFY (64 aa)) form a disordered region.

It belongs to the TIFY/JAZ family. Ubiquitinated. Targeted for degradation by the SCF(COI1) E3 ubiquitin ligase-proteasome pathway during jasmonate signaling.

Its subcellular location is the nucleus. In terms of biological role, repressor of jasmonate responses. In Oryza sativa subsp. japonica (Rice), this protein is Protein TIFY 11f.